Here is a 77-residue protein sequence, read N- to C-terminus: Acyl carrier protein (77 aa).

The region spanning 4 to 77 (SETFEKVKKI…TVQAAVDXIN (74 aa)) is the Carrier domain. Ser40 carries the post-translational modification O-(pantetheine 4'-phosphoryl)serine.

The protein belongs to the acyl carrier protein (ACP) family. In terms of processing, 4'-phosphopantetheine is transferred from CoA to a specific serine of apo-ACP by AcpS. This modification is essential for activity because fatty acids are bound in thioester linkage to the sulfhydryl of the prosthetic group.

The protein resides in the cytoplasm. It functions in the pathway lipid metabolism; fatty acid biosynthesis. Its function is as follows. Carrier of the growing fatty acid chain in fatty acid biosynthesis. The protein is Acyl carrier protein of Anabaena variabilis.